The chain runs to 372 residues: High-affinity lysophosphatidic acid receptor (372 aa).

The Extracellular portion of the chain corresponds to Met-1–Ala-38. Asn-4 and Asn-15 each carry an N-linked (GlcNAc...) asparagine glycan. Residues Ile-39–Val-59 traverse the membrane as a helical segment. Over Tyr-60–Asp-80 the chain is Cytoplasmic. Residues Ile-81–Leu-101 form a helical membrane-spanning segment. The Extracellular segment spans residues Phe-102–Gln-108. Residues Ile-109–Ser-129 traverse the membrane as a helical segment. The Cytoplasmic segment spans residues Val-130–Lys-149. The helical transmembrane segment at Ile-150–Trp-170 threads the bilayer. At Thr-171 to Met-198 the chain is on the extracellular side. A helical transmembrane segment spans residues Leu-199–Leu-219. Residues Asn-220 to Thr-268 lie on the Cytoplasmic side of the membrane. The chain crosses the membrane as a helical span at residues Ile-269–Leu-289. Topologically, residues Ser-290–Ser-301 are extracellular. Residues Phe-302–Tyr-324 form a helical membrane-spanning segment. Over Cys-325–Val-372 the chain is Cytoplasmic.

This sequence belongs to the G-protein coupled receptor 1 family. In terms of tissue distribution, ubiquitously expressed.

The protein resides in the cell membrane. Highly selective receptor for lysophosphatidic acid (LPA), a mediator of diverse cellular activities. The chain is High-affinity lysophosphatidic acid receptor from Xenopus laevis (African clawed frog).